A 419-amino-acid polypeptide reads, in one-letter code: Putative actin-fragmin kinase DDB_G0279609 (419 aa).

Residues 73-94 (INNNNNSINNNNNNNNKNKNKN) are disordered.

Belongs to the protein kinase superfamily. AFK Ser/Thr protein kinase family.

This chain is Putative actin-fragmin kinase DDB_G0279609, found in Dictyostelium discoideum (Social amoeba).